The sequence spans 569 residues: Interleukin-1 receptor type 1 (569 aa).

Residues 1–17 form the signal peptide; it reads MKVLLRLICFIALLISS. At 18 to 336 the chain is on the extracellular side; it reads LEADKCKERE…LIYPVTNFQK (319 aa). Cystine bridges form between cysteine 23-cysteine 104, cysteine 44-cysteine 96, cysteine 121-cysteine 164, and cysteine 142-cysteine 196. Ig-like C2-type domains lie at 23–110, 118–210, and 226–328; these read CKER…IKIS, PNLC…YPIT, and PVIV…IQLI. The N-linked (GlcNAc...) asparagine glycan is linked to asparagine 100. 5 N-linked (GlcNAc...) asparagine glycosylation sites follow: asparagine 193, asparagine 233, asparagine 249, asparagine 263, and asparagine 297. A disulfide bridge links cysteine 248 with cysteine 312. The helical transmembrane segment at 337–356 threads the bilayer; the sequence is HMIGICVTLTVIIVCSVFIY. Topologically, residues 357–569 are cytoplasmic; it reads KIFKIDIVLW…LQREAHVPLG (213 aa). In terms of domain architecture, TIR spans 383-538; sequence KTYDAYILYP…RFWKNVRYHM (156 aa). Glutamate 470 is an active-site residue. Tyrosine 496 carries the post-translational modification Phosphotyrosine. A disordered region spans residues 540-569; sequence VQRRSPSSKHQLLSPATKEKLQREAHVPLG. Positions 556-569 are enriched in basic and acidic residues; it reads TKEKLQREAHVPLG.

Belongs to the interleukin-1 receptor family. As to quaternary structure, the interleukin-1 receptor complex is a heterodimer of IL1R1 and IL1RAP. Interacts with PIK3R1. Interacts with IL1A. Post-translationally, a soluble form (sIL1R1) is probably produced by proteolytic cleavage at the cell surface (shedding). Rapidly phosphorylated on Tyr-496 in response to IL-1, which creates a SH2 binding site for the PI 3-kinase regulatory subunit PIK3R1. Expressed in T-helper cell subsets. Preferentially expressed in T-helper 1 (Th1) cells.

It is found in the membrane. The protein resides in the cell membrane. It localises to the secreted. It catalyses the reaction NAD(+) + H2O = ADP-D-ribose + nicotinamide + H(+). Functionally, receptor for IL1A, IL1B and IL1RN. After binding to interleukin-1 associates with the coreceptor IL1RAP to form the high affinity interleukin-1 receptor complex which mediates interleukin-1-dependent activation of NF-kappa-B, MAPK and other pathways. Signaling involves the recruitment of adapter molecules such as TOLLIP, MYD88, and IRAK1 or IRAK2 via the respective TIR domains of the receptor/coreceptor subunits. Binds ligands with comparable affinity and binding of antagonist IL1RN prevents association with IL1RAP to form a signaling complex. Involved in IL1B-mediated costimulation of IFNG production from T-helper 1 (Th1) cells. The protein is Interleukin-1 receptor type 1 (IL1R1) of Homo sapiens (Human).